A 334-amino-acid polypeptide reads, in one-letter code: MAVDITLLFRASVKTVKTRNKALGVAVGGGADGSRDELFRRSPRPKGDFSSRAREVISHIGKLRDFLLEHRKEYINAYSHTMSDYGRMTDTERDQIDQDAQIFIRTCSEAIHQLRTEAHKEIHSQQVKEHRTAVLDFVDDYLKRVCKLYSEQRAIRVKRVVDKKRLSKLEPEPHTKRKDSTSEKAPQNASQDSEGKPAAEELPEKPLAESQPELGTWGDGKGEDELSPEEIQMFEQENQRLIGEMNSLFDEVRQIEGKVVEISRLQEIFTEKVLQQETEIDSIHQLVVGATENIKEGNEDIREAIKNNAGFRVWILFFLVMCSFSLLFLDWYDS.

Residues Met1 to Asn308 lie on the Cytoplasmic side of the membrane. Disordered regions lie at residues Gly29 to Ser50 and Leu166 to Glu225. Composition is skewed to basic and acidic residues over residues Gly33–Ser50 and Leu166–Ser182. Over residues Glu183–Asp192 the composition is skewed to polar residues. Basic and acidic residues predominate over residues Ser193–Leu207. The t-SNARE coiled-coil homology domain occupies Ile242 to Ala304. A helical; Anchor for type IV membrane protein membrane pass occupies residues Ala309–Leu329. Residues Asp330–Ser334 lie on the Lumenal side of the membrane.

It belongs to the syntaxin family. Component of a SNARE complex consisting of STX18, USE1L, BNIP1/SEC20L, and SEC22B. RINT1/TIP20L and ZW10 are associated with the complex through interaction with BNIP1/SEC20L. Interacts directly with USE1L and BNIP1/SEC20L.

The protein resides in the endoplasmic reticulum membrane. It localises to the golgi apparatus membrane. Syntaxin that may be involved in targeting and fusion of Golgi-derived retrograde transport vesicles with the ER. This is Syntaxin-18 (Stx18) from Mus musculus (Mouse).